The chain runs to 80 residues: UPF0512 protein Q (80 aa).

The protein belongs to the UPF0512 family.

The chain is UPF0512 protein Q from Dictyostelium discoideum (Social amoeba).